Here is a 285-residue protein sequence, read N- to C-terminus: Glutamate racemase (285 aa).

Residues 28–29 (DS) and 60–61 (YG) contribute to the substrate site. Cys92 acts as the Proton donor/acceptor in catalysis. Position 93-94 (93-94 (NT)) interacts with substrate. Residue Cys204 is the Proton donor/acceptor of the active site. 205–206 (TH) lines the substrate pocket.

The protein belongs to the aspartate/glutamate racemases family.

It catalyses the reaction L-glutamate = D-glutamate. Its pathway is cell wall biogenesis; peptidoglycan biosynthesis. Its function is as follows. Provides the (R)-glutamate required for cell wall biosynthesis. The polypeptide is Glutamate racemase (Escherichia fergusonii (strain ATCC 35469 / DSM 13698 / CCUG 18766 / IAM 14443 / JCM 21226 / LMG 7866 / NBRC 102419 / NCTC 12128 / CDC 0568-73)).